The primary structure comprises 470 residues: Calmodulin-binding receptor-like cytoplasmic kinase 1 (470 aa).

Disordered regions lie at residues 1–29 and 65–128; these read MPMRSKTPTPLRFSNGKHQRDDSEYSWTD and PTEC…SKSW. Residues 65–82 show a composition bias toward basic and acidic residues; sequence PTECRSDPGESSTHDRES. Composition is skewed to polar residues over residues 83-98 and 108-121; these read TLSGWTGYSSPSSFGR and YRFSGSRFQSPGKD. The Protein kinase domain maps to 147–423; it reads FSSVHQIGEG…MKGIAEKLWA (277 aa). Residues 153-161 and lysine 175 each bind ATP; that span reads IGEGGFGTV. The segment at 162–185 is caM-binding; that stretch reads FKGKLDDGTIVAIKRARKNNYGKS. Catalysis depends on aspartate 273, which acts as the Proton acceptor. 2 positions are modified to phosphoserine: serine 277 and serine 308. Phosphothreonine is present on threonine 309. Tyrosine 322 carries the post-translational modification Phosphotyrosine.

This sequence belongs to the protein kinase superfamily. Ser/Thr protein kinase family. As to quaternary structure, interacts with calmodulin (CaM) in a Ca(2+)-dependent manner. Mg(2+) serves as cofactor. Post-translationally, autophosphorylated.

The protein localises to the cytoplasm. It catalyses the reaction L-seryl-[protein] + ATP = O-phospho-L-seryl-[protein] + ADP + H(+). The enzyme catalyses L-threonyl-[protein] + ATP = O-phospho-L-threonyl-[protein] + ADP + H(+). With respect to regulation, up-regulated by Ca(2+)/CaM. The protein is Calmodulin-binding receptor-like cytoplasmic kinase 1 (CRCK1) of Arabidopsis thaliana (Mouse-ear cress).